The chain runs to 957 residues: Glycine dehydrogenase (decarboxylating) (957 aa).

Lys704 is modified (N6-(pyridoxal phosphate)lysine).

This sequence belongs to the GcvP family. The glycine cleavage system is composed of four proteins: P, T, L and H. Requires pyridoxal 5'-phosphate as cofactor.

It catalyses the reaction N(6)-[(R)-lipoyl]-L-lysyl-[glycine-cleavage complex H protein] + glycine + H(+) = N(6)-[(R)-S(8)-aminomethyldihydrolipoyl]-L-lysyl-[glycine-cleavage complex H protein] + CO2. The glycine cleavage system catalyzes the degradation of glycine. The P protein binds the alpha-amino group of glycine through its pyridoxal phosphate cofactor; CO(2) is released and the remaining methylamine moiety is then transferred to the lipoamide cofactor of the H protein. The protein is Glycine dehydrogenase (decarboxylating) of Bordetella petrii (strain ATCC BAA-461 / DSM 12804 / CCUG 43448).